The primary structure comprises 56 residues: MAKNANRVKIGLKCSECGDINYTTYKNNKNTANKIELKKYCPRLKKHTVHKEIKLK.

The protein belongs to the bacterial ribosomal protein bL33 family.

The protein is Large ribosomal subunit protein bL33 of Campylobacter hominis (strain ATCC BAA-381 / DSM 21671 / CCUG 45161 / LMG 19568 / NCTC 13146 / CH001A).